A 32-amino-acid polypeptide reads, in one-letter code: Lectin (32 aa).

Belongs to the leguminous lectin family. As to quaternary structure, homotetramer.

Functionally, metalloglycoprotein, containing Ca, Mg, Mn, and Zn and the carbohydrates galactose, glucosamine, mannose, and fucose. It agglutinates erythrocytes of blood group A1. This is Lectin from Macrotyloma axillare (Perennial horse gram).